The primary structure comprises 196 residues: Anthranilate synthase component 2 (196 aa).

One can recognise a Glutamine amidotransferase type-1 domain in the interval 3–196; that stretch reads NIVFIDNFDS…IEWALEKNNA (194 aa). 57–59 lines the L-glutamine pocket; it reads GPG. The active-site Nucleophile; for GATase activity is the C84. L-glutamine contacts are provided by residues Q88 and 134–135; that span reads SL. Residues H170 and E172 each act as for GATase activity in the active site.

As to quaternary structure, heterotetramer consisting of two non-identical subunits: a beta subunit (TrpG) and a large alpha subunit (TrpE).

It catalyses the reaction chorismate + L-glutamine = anthranilate + pyruvate + L-glutamate + H(+). The protein operates within amino-acid biosynthesis; L-tryptophan biosynthesis; L-tryptophan from chorismate: step 1/5. Its function is as follows. Part of a heterotetrameric complex that catalyzes the two-step biosynthesis of anthranilate, an intermediate in the biosynthesis of L-tryptophan. In the first step, the glutamine-binding beta subunit (TrpG) of anthranilate synthase (AS) provides the glutamine amidotransferase activity which generates ammonia as a substrate that, along with chorismate, is used in the second step, catalyzed by the large alpha subunit of AS (TrpE) to produce anthranilate. In the absence of TrpG, TrpE can synthesize anthranilate directly from chorismate and high concentrations of ammonia. The chain is Anthranilate synthase component 2 (trpG) from Vibrio parahaemolyticus serotype O3:K6 (strain RIMD 2210633).